The following is a 518-amino-acid chain: Membrane-bound lytic murein transglycosylase F (518 aa).

The first 21 residues, 1–21 (MKKLKINYLFIGILALLLAVA), serve as a signal peptide directing secretion. The tract at residues 22–269 (LWPSIPWFGK…RIEEKYLGHG (248 aa)) is non-LT domain. The tract at residues 270–518 (DDFDYVDTRT…SRKGSEEKQN (249 aa)) is LT domain. The active site involves Glu-314.

This sequence in the N-terminal section; belongs to the bacterial solute-binding protein 3 family. It in the C-terminal section; belongs to the transglycosylase Slt family.

It is found in the cell outer membrane. The catalysed reaction is Exolytic cleavage of the (1-&gt;4)-beta-glycosidic linkage between N-acetylmuramic acid (MurNAc) and N-acetylglucosamine (GlcNAc) residues in peptidoglycan, from either the reducing or the non-reducing ends of the peptidoglycan chains, with concomitant formation of a 1,6-anhydrobond in the MurNAc residue.. Functionally, murein-degrading enzyme that degrades murein glycan strands and insoluble, high-molecular weight murein sacculi, with the concomitant formation of a 1,6-anhydromuramoyl product. Lytic transglycosylases (LTs) play an integral role in the metabolism of the peptidoglycan (PG) sacculus. Their lytic action creates space within the PG sacculus to allow for its expansion as well as for the insertion of various structures such as secretion systems and flagella. This Escherichia coli O6:H1 (strain CFT073 / ATCC 700928 / UPEC) protein is Membrane-bound lytic murein transglycosylase F.